The following is a 60-amino-acid chain: Large ribosomal subunit protein uL30 (60 aa).

The protein belongs to the universal ribosomal protein uL30 family. As to quaternary structure, part of the 50S ribosomal subunit.

The protein is Large ribosomal subunit protein uL30 of Cupriavidus metallidurans (strain ATCC 43123 / DSM 2839 / NBRC 102507 / CH34) (Ralstonia metallidurans).